Consider the following 112-residue polypeptide: Large ribosomal subunit protein uL1 (112 aa).

It belongs to the universal ribosomal protein uL1 family.

This is Large ribosomal subunit protein uL1 (rpl-10a) from Caenorhabditis remanei (Caenorhabditis vulgaris).